Here is a 25-residue protein sequence, read N- to C-terminus: Caerin-1.17 (25 aa).

Position 25 is a leucine amide (leucine 25).

The protein belongs to the frog skin active peptide (FSAP) family. Caerin subfamily. Expressed by the skin dorsal glands.

It localises to the secreted. Its function is as follows. Caerin-1.17 shows significant activity against Gram-positive organisms, but is less effective against Gram-negative organisms. The sequence is that of Caerin-1.17 from Ranoidea gracilenta (Dainty green tree frog).